Here is a 439-residue protein sequence, read N- to C-terminus: Xaa-Pro dipeptidase (439 aa).

Mn(2+) is bound by residues Asp244, Asp255, His335, Glu380, and Glu419.

Belongs to the peptidase M24B family. Bacterial-type prolidase subfamily. Mn(2+) serves as cofactor.

It catalyses the reaction Xaa-L-Pro dipeptide + H2O = an L-alpha-amino acid + L-proline. In terms of biological role, splits dipeptides with a prolyl residue in the C-terminal position. The sequence is that of Xaa-Pro dipeptidase from Shewanella sp. (strain ANA-3).